Here is a 66-residue protein sequence, read N- to C-terminus: Large ribosomal subunit protein bL31 (66 aa).

Zn(2+)-binding residues include Cys-16, Cys-18, Cys-36, and Cys-39.

It belongs to the bacterial ribosomal protein bL31 family. Type A subfamily. As to quaternary structure, part of the 50S ribosomal subunit. Requires Zn(2+) as cofactor.

Binds the 23S rRNA. In Campylobacter curvus (strain 525.92), this protein is Large ribosomal subunit protein bL31.